A 205-amino-acid chain; its full sequence is LexA repressor (205 aa).

The H-T-H motif DNA-binding region spans 28 to 48 (VREIGEAVGLASSSTVHGHLA). Residues Ser-127 and Lys-165 each act as for autocatalytic cleavage activity in the active site.

This sequence belongs to the peptidase S24 family. As to quaternary structure, homodimer. In terms of processing, following treatment with mitomycin C protein levels begin to decrease after a 5-min lag and do not return to their original levels for at least 90 minutes.

It carries out the reaction Hydrolysis of Ala-|-Gly bond in repressor LexA.. Its function is as follows. Represses dinA, dinB, dinC, recA genes and itself by binding to the 14 bp palindromic sequence 5'-CGAACNNNNGTTCG-3'; some genes have a tandem consensus sequence and their binding is cooperative. In the presence of single-stranded DNA, RecA interacts with LexA causing an autocatalytic cleavage which disrupts the DNA-binding part of LexA, leading to derepression of the SOS regulon and eventually DNA repair; autocleavage is maximal at pH 11 in the absence of RecA and ssDNA. The polypeptide is LexA repressor (Bacillus subtilis (strain 168)).